We begin with the raw amino-acid sequence, 280 residues long: Mastin (280 aa).

Positions 1-15 are cleaved as a signal peptide; sequence MLWLLVLTAPWLGGS. The propeptide occupies 16-30; sequence VPISPDPGLRHEQVG. Residues 31–275 form the Peptidase S1 domain; it reads IVGGCKVPAR…YVSWIHQHIP (245 aa). The cysteines at positions 62 and 78 are disulfide-linked. Catalysis depends on H77, which acts as the Charge relay system. N-linked (GlcNAc...) asparagine glycosylation is found at N106 and N117. D127 (charge relay system) is an active-site residue. 3 cysteine pairs are disulfide-bonded: C161–C234, C194–C215, and C224–C252. Residue S228 is the Charge relay system of the active site.

The protein belongs to the peptidase S1 family. Oligomer; disulfide-linked. Post-translationally, N-glycosylated. In terms of tissue distribution, mononuclear cells within skin, intestine, trachea and lung parenchyma, and polymorphonuclear leukocytes within capillaries and blood.

The protein localises to the cytoplasm. Its activity is regulated as follows. Inhibited by leupeptin and bis(5-amidino-2-benzimidazolyl)methane (BABIM). Trypsin-like serine protease. Has a preference for extended substrates with basic residues at the P1 position; Arg is preferred over Lys. Active towards calcitonin gene-related peptide and gelatin. Not active towards substance P, vasoactive intestinal peptide, type I collagen or azocasein. In Canis lupus familiaris (Dog), this protein is Mastin.